A 302-amino-acid chain; its full sequence is 4-hydroxy-tetrahydrodipicolinate synthase (302 aa).

Threonine 55 contacts pyruvate. The active-site Proton donor/acceptor is tyrosine 144. Lysine 172 serves as the catalytic Schiff-base intermediate with substrate. Valine 214 lines the pyruvate pocket.

It belongs to the DapA family. In terms of assembly, homotetramer; dimer of dimers.

The protein resides in the cytoplasm. It carries out the reaction L-aspartate 4-semialdehyde + pyruvate = (2S,4S)-4-hydroxy-2,3,4,5-tetrahydrodipicolinate + H2O + H(+). It functions in the pathway amino-acid biosynthesis; L-lysine biosynthesis via DAP pathway; (S)-tetrahydrodipicolinate from L-aspartate: step 3/4. Functionally, catalyzes the condensation of (S)-aspartate-beta-semialdehyde [(S)-ASA] and pyruvate to 4-hydroxy-tetrahydrodipicolinate (HTPA). The sequence is that of 4-hydroxy-tetrahydrodipicolinate synthase from Prochlorococcus marinus (strain NATL2A).